Here is a 55-residue protein sequence, read N- to C-terminus: Ferredoxin (55 aa).

4Fe-4S ferredoxin-type domains are found at residues 2 to 27 (YKITDGCINCGACEPECPVEAISESD) and 28 to 55 (AVRVIDADKCIDCGACANTCPVDAIVEG). Cys8, Cys11, Cys14, Cys18, Cys37, Cys40, Cys43, and Cys47 together coordinate [4Fe-4S] cluster.

It depends on [4Fe-4S] cluster as a cofactor.

Functionally, ferredoxins are iron-sulfur proteins that transfer electrons in a wide variety of metabolic reactions. This is Ferredoxin from Clostridium sp. (strain M-E).